A 216-amino-acid chain; its full sequence is Deoxyribose-phosphate aldolase (216 aa).

Residue Asp-89 is the Proton donor/acceptor of the active site. Catalysis depends on Lys-153, which acts as the Schiff-base intermediate with acetaldehyde. Lys-182 acts as the Proton donor/acceptor in catalysis.

It belongs to the DeoC/FbaB aldolase family. DeoC type 1 subfamily.

It is found in the cytoplasm. It catalyses the reaction 2-deoxy-D-ribose 5-phosphate = D-glyceraldehyde 3-phosphate + acetaldehyde. Its pathway is carbohydrate degradation; 2-deoxy-D-ribose 1-phosphate degradation; D-glyceraldehyde 3-phosphate and acetaldehyde from 2-deoxy-alpha-D-ribose 1-phosphate: step 2/2. In terms of biological role, catalyzes a reversible aldol reaction between acetaldehyde and D-glyceraldehyde 3-phosphate to generate 2-deoxy-D-ribose 5-phosphate. The sequence is that of Deoxyribose-phosphate aldolase from Treponema denticola (strain ATCC 35405 / DSM 14222 / CIP 103919 / JCM 8153 / KCTC 15104).